The chain runs to 274 residues: MEAPPPPPPLPATTLAPGRSRKLLLLPLLLFLLRAEAVRGFEAEERPRTREEECHFYAGGQVYPGEVSRVSVAEHSLHLSKAKISKPAPYWEGTAVINGEFKELKLTDYRGKYLVFFFYPLDFTFVCPTEIIAFGDRIDEFRSINTEVVACSVDSQFTHLAWINTPRRQGGLGSINIPLLADLNHQISKDYGVYLEDSGHTLRGLFIIDDKGILRQITLNDLPVGRSVDETLRLVQAFQYTDKHGEVCPAGWKPGSETIIPDPAGKLKYFDKLN.

The first 40 residues, 1-40, serve as a signal peptide directing secretion; the sequence is MEAPPPPPPLPATTLAPGRSRKLLLLPLLLFLLRAEAVRG. Residues 82–240 enclose the Thioredoxin domain; the sequence is AKISKPAPYW…TLRLVQAFQY (159 aa). C127 acts as the Cysteine sulfenic acid (-SOH) intermediate in catalysis.

The protein belongs to the peroxiredoxin family. AhpC/Prx1 subfamily. Homodimer; disulfide-linked, upon oxidation. 5 homodimers assemble to form a ring-like decamer. In terms of processing, the enzyme can be inactivated by further oxidation of the cysteine sulfenic acid (C(P)-SOH) to sulphinic acid (C(P)-SO2H) and sulphonic acid (C(P)-SO3H) instead of its condensation to a disulfide bond.

The protein resides in the cytoplasm. The protein localises to the endoplasmic reticulum. It catalyses the reaction a hydroperoxide + [thioredoxin]-dithiol = an alcohol + [thioredoxin]-disulfide + H2O. Thiol-specific peroxidase that catalyzes the reduction of hydrogen peroxide and organic hydroperoxides to water and alcohols, respectively. Plays a role in cell protection against oxidative stress by detoxifying peroxides and as sensor of hydrogen peroxide-mediated signaling events. Regulates the activation of NF-kappa-B in the cytosol by a modulation of I-kappa-B-alpha phosphorylation. The protein is Peroxiredoxin-4 (PRDX4) of Bos taurus (Bovine).